We begin with the raw amino-acid sequence, 262 residues long: Glutamate racemase (262 aa).

Substrate contacts are provided by residues 7 to 8 (DS) and 39 to 40 (YG). Cys-70 acts as the Proton donor/acceptor in catalysis. 71–72 (NT) serves as a coordination point for substrate. Cys-182 functions as the Proton donor/acceptor in the catalytic mechanism. 183–184 (TH) is a binding site for substrate.

This sequence belongs to the aspartate/glutamate racemases family.

The catalysed reaction is L-glutamate = D-glutamate. Its pathway is cell wall biogenesis; peptidoglycan biosynthesis. Provides the (R)-glutamate required for cell wall biosynthesis. The sequence is that of Glutamate racemase from Campylobacter concisus (strain 13826).